The primary structure comprises 224 residues: Protein GrpE (224 aa).

Positions 1–72 are disordered; that stretch reads MEKERDVAQE…KAKEEQNEEL (72 aa). The span at 10–19 shows a compositional bias: polar residues; it reads EQATYEQESP. The segment covering 20–67 has biased composition (basic and acidic residues); that stretch reads NAERQEELKENEHQEKNAPEEQEKVREENGRQDAQKDEIGDPEKAKEE.

Belongs to the GrpE family. Homodimer.

It localises to the cytoplasm. Its function is as follows. Participates actively in the response to hyperosmotic and heat shock by preventing the aggregation of stress-denatured proteins, in association with DnaK and GrpE. It is the nucleotide exchange factor for DnaK and may function as a thermosensor. Unfolded proteins bind initially to DnaJ; upon interaction with the DnaJ-bound protein, DnaK hydrolyzes its bound ATP, resulting in the formation of a stable complex. GrpE releases ADP from DnaK; ATP binding to DnaK triggers the release of the substrate protein, thus completing the reaction cycle. Several rounds of ATP-dependent interactions between DnaJ, DnaK and GrpE are required for fully efficient folding. This Parageobacillus thermoglucosidasius (Geobacillus thermoglucosidasius) protein is Protein GrpE.